The sequence spans 103 residues: Large ribosomal subunit protein uL24 (103 aa).

It belongs to the universal ribosomal protein uL24 family. In terms of assembly, part of the 50S ribosomal subunit.

Its function is as follows. One of two assembly initiator proteins, it binds directly to the 5'-end of the 23S rRNA, where it nucleates assembly of the 50S subunit. One of the proteins that surrounds the polypeptide exit tunnel on the outside of the subunit. The polypeptide is Large ribosomal subunit protein uL24 (Vesicomyosocius okutanii subsp. Calyptogena okutanii (strain HA)).